A 423-amino-acid polypeptide reads, in one-letter code: UPF0229 protein PLES_05841 (423 aa).

The segment at 84-107 (AGEHIARPSGGGGGRGGGKASNSG) is disordered. Gly residues predominate over residues 92-102 (SGGGGGRGGGK).

It belongs to the UPF0229 family.

The polypeptide is UPF0229 protein PLES_05841 (Pseudomonas aeruginosa (strain LESB58)).